Here is a 276-residue protein sequence, read N- to C-terminus: Type III pantothenate kinase (276 aa).

Residue 18–25 participates in ATP binding; sequence EIGNSRLH. Residues tyrosine 116 and 120 to 123 contribute to the substrate site; that span reads GIDR. The active-site Proton acceptor is the aspartate 122. Residue aspartate 142 coordinates K(+). Threonine 145 contacts ATP. Residue threonine 200 participates in substrate binding.

It belongs to the type III pantothenate kinase family. As to quaternary structure, homodimer. NH4(+) is required as a cofactor. It depends on K(+) as a cofactor.

The protein resides in the cytoplasm. It catalyses the reaction (R)-pantothenate + ATP = (R)-4'-phosphopantothenate + ADP + H(+). The protein operates within cofactor biosynthesis; coenzyme A biosynthesis; CoA from (R)-pantothenate: step 1/5. Functionally, catalyzes the phosphorylation of pantothenate (Pan), the first step in CoA biosynthesis. The chain is Type III pantothenate kinase from Nostoc sp. (strain PCC 7120 / SAG 25.82 / UTEX 2576).